The primary structure comprises 140 residues: Ribosome-binding factor A (140 aa).

This sequence belongs to the RbfA family. Monomer. Binds 30S ribosomal subunits, but not 50S ribosomal subunits or 70S ribosomes.

Its subcellular location is the cytoplasm. In terms of biological role, one of several proteins that assist in the late maturation steps of the functional core of the 30S ribosomal subunit. Associates with free 30S ribosomal subunits (but not with 30S subunits that are part of 70S ribosomes or polysomes). Required for efficient processing of 16S rRNA. May interact with the 5'-terminal helix region of 16S rRNA. The sequence is that of Ribosome-binding factor A from Cereibacter sphaeroides (strain ATCC 17025 / ATH 2.4.3) (Rhodobacter sphaeroides).